We begin with the raw amino-acid sequence, 578 residues long: Proline--tRNA ligase (578 aa).

The protein belongs to the class-II aminoacyl-tRNA synthetase family. ProS type 1 subfamily. In terms of assembly, homodimer.

The protein localises to the cytoplasm. It catalyses the reaction tRNA(Pro) + L-proline + ATP = L-prolyl-tRNA(Pro) + AMP + diphosphate. In terms of biological role, catalyzes the attachment of proline to tRNA(Pro) in a two-step reaction: proline is first activated by ATP to form Pro-AMP and then transferred to the acceptor end of tRNA(Pro). As ProRS can inadvertently accommodate and process non-cognate amino acids such as alanine and cysteine, to avoid such errors it has two additional distinct editing activities against alanine. One activity is designated as 'pretransfer' editing and involves the tRNA(Pro)-independent hydrolysis of activated Ala-AMP. The other activity is designated 'posttransfer' editing and involves deacylation of mischarged Ala-tRNA(Pro). The misacylated Cys-tRNA(Pro) is not edited by ProRS. The protein is Proline--tRNA ligase of Burkholderia multivorans (strain ATCC 17616 / 249).